The chain runs to 372 residues: Homoserine dehydrogenase (372 aa).

V13, G15, V16, and T99 together coordinate NAD(+). NADP(+) contacts are provided by V16 and T99. Residues V16, T99, S100, and K123 each coordinate NADPH. K123 provides a ligand contact to NADP(+). Na(+)-binding residues include E150, V153, A155, and L157. G216 and E219 together coordinate NADP(+). Residues E219 and D230 each coordinate L-homoserine. K234 (proton donor) is an active-site residue. An NAD(+)-binding site is contributed by G352. G352 lines the NADP(+) pocket. Position 352 (G352) interacts with NADPH.

Belongs to the homoserine dehydrogenase family. In terms of assembly, homodimer. Requires a metal cation as cofactor.

It catalyses the reaction L-homoserine + NADP(+) = L-aspartate 4-semialdehyde + NADPH + H(+). The enzyme catalyses L-homoserine + NAD(+) = L-aspartate 4-semialdehyde + NADH + H(+). The protein operates within amino-acid biosynthesis; L-methionine biosynthesis via de novo pathway; L-homoserine from L-aspartate: step 3/3. Its pathway is amino-acid biosynthesis; L-threonine biosynthesis; L-threonine from L-aspartate: step 3/5. Catalyzes the conversion of L-aspartate-beta-semialdehyde (L-Asa) to L-homoserine (L-Hse), the third step in the biosynthesis of amino acids that derive from aspartate (the aspartate family of amino acids), including methioinine and threonine, the latter of which is a precursor to isoleucine; production of homoserine leads to a branch-point in the pathway as it can either be O-phosphorylated for processing to threonine, or O-acylated for processing to methionine. This Paracoccidioides brasiliensis (strain Pb18) protein is Homoserine dehydrogenase.